Reading from the N-terminus, the 2737-residue chain is Non-reducing polyketide synthase ATEG_07661 (2737 aa).

Residues 75–245 are N-terminal acylcarrier protein transacylase domain (SAT); the sequence is SRSLAELDSW…VRYDQTRATV (171 aa). Catalysis depends on Cys154, which acts as the Nucleophile; for transacylase activity. His276 serves as the catalytic Proton donor/acceptor; for transacylase activity. One can recognise a Ketosynthase family 3 (KS3) domain in the interval 427 to 854; that stretch reads NEAIAIVGMS…GSNASMIITE (428 aa). Residues Cys603, His738, and His777 each act as for beta-ketoacyl synthase activity in the active site. Positions 969–1260 are malonyl-CoA:ACP transacylase (MAT); that stretch reads FGGQVSRFVG…IMASRAIAQS (292 aa). Positions 1368–1503 are N-terminal hotdog fold; the sequence is LQSLWNFVEF…ASVEMRAPTD (136 aa). One can recognise a PKS/mFAS DH domain in the interval 1368-1683; that stretch reads LQSLWNFVEF…YGRVAKASMS (316 aa). Residues 1399–1681 are product template (PT) domain; the sequence is FVLSHVIAQT…VQYGRVAKAS (283 aa). His1403 functions as the Proton acceptor; for dehydratase activity in the catalytic mechanism. Residues 1535–1683 form a C-terminal hotdog fold region; sequence VEVLQGRNVY…YGRVAKASMS (149 aa). The active-site Proton donor; for dehydratase activity is the Asp1592. Residues 1724–1747 form a disordered region; that stretch reads SRTTKKKAKASKSKSSVKKDKAPS. A compositionally biased stretch (basic residues) spans 1725–1739; that stretch reads RTTKKKAKASKSKSS. One can recognise a Carrier domain in the interval 1750 to 1824; sequence RDITDEVRNL…KFVACVSNAL (75 aa). Ser1784 is modified (O-(pantetheine 4'-phosphoryl)serine). Residues 1827–1876 are disordered; it reads PNQGQSSIDEDDEDDEHSEDSSNESSSAASDEDASSGLESPDTGILTPED. The segment covering 1834–1848 has biased composition (acidic residues); the sequence is IDEDDEDDEHSEDSS. Residues 1849–1866 are compositionally biased toward low complexity; that stretch reads NESSSAASDEDASSGLES. Positions 2094 to 2270 are methyltransferase domain; the sequence is ADRIQSSSGS…GFGHVDWTDG (177 aa). Positions 2362-2665 are NADPH-binding domain; that stretch reads VVLVTGATGS…IPFKDWISRV (304 aa).

It participates in secondary metabolite biosynthesis. Non-reducing polyketide synthase; part of the cluster B that mediates the biosynthesis of azasperpyranones, members of the azaphilone family that exhibit anti-cancer activities. Azasperpyranones are synthesized by 2 clusters, A and B. Cluster A is responsible for the production of the polyhydric phenol moiety while the azaphilonoid scaffold is produced by the cluster B. The non-reducing polyketide synthase ATEG_03629 produces 5-methyl orsellinic acid, which is then reduced to 5-methyl orsellinic aldehyde by the NRPS-like protein ATEG_03630. 5-methyl orsellinic aldehyde is then first hydroxylated by the FAD-dependent monooxygenase ATEG_03635 and subsequently hydroxylated by the cytochrome P450 monooxygenase ATEG_03631 to produce the unstable polyhydric phenol precursor of azasperpyranones. On the other hand, the polyketide synthase ATEG_07659 is responsible for producing the 3,5-dimethyloctadienone moiety from acetyl-CoA, three malonyl-CoA, and two S-adenosyl methionines (SAM). The 3,5-dimethyloctadienone moiety is then loaded onto the SAT domain of ATEG_07661 and extended with four malonyl-CoA and one SAM, which leads to the formation of 2,4-dihydroxy-6-(5,7-dimethyl-2-oxo-trans-3-trans-5-nonadienyl)-3-methylbenzaldehyde (compound 8) after reductive release and aldol condensation. The FAD-dependent monooxygenase ATEG_07662 is the next enzyme in the biosynthesis sequence and hydroxylates the side chain at the benzylic position of compound 8. In Aspergillus nidulans, afoF, the ortholog of the FAD-dependent oxygenase ATEG_07660, is the key enzyme for the biosynthesis of asperfuranone by catalyzing the hydroxylation at C-8 of to prevent the formation of a six-membered ring hemiacetal intermediate and thus facilitating the formation of a five-membered ring to produce asperfuranone. In Aspergillus terreus, ATEG_07660 is probably not functional, which leads to the formation of the six-membered ring hemiacetal intermediate presperpyranone instead of asperfuranone. Finally, ATEG_03636 is involved in the condensation of the polyhydric phenol moiety produced by cluster A and the perasperpyranone precursor produced by cluster B, to yield azasperpyranone A. Further modifications of azasperpyranone A result in the production of derivatives, including azasperpyranone B to F. In Aspergillus terreus (strain NIH 2624 / FGSC A1156), this protein is Non-reducing polyketide synthase ATEG_07661.